Consider the following 188-residue polypeptide: dCTP deaminase (188 aa).

DCTP is bound at residue 109–114 (KSTYAR). The Proton donor/acceptor role is filled by Glu135. Gln154, Tyr168, and Gln178 together coordinate dCTP.

The protein belongs to the dCTP deaminase family. Homotrimer.

The catalysed reaction is dCTP + H2O + H(+) = dUTP + NH4(+). The protein operates within pyrimidine metabolism; dUMP biosynthesis; dUMP from dCTP (dUTP route): step 1/2. In terms of biological role, catalyzes the deamination of dCTP to dUTP. The polypeptide is dCTP deaminase (Helicobacter acinonychis (strain Sheeba)).